Reading from the N-terminus, the 213-residue chain is Pyridoxine/pyridoxamine 5'-phosphate oxidase (213 aa).

FMN is bound by residues 60-65 (RMVLMK), 75-76 (YS), Lys-82, and Gln-104. Substrate is bound at residue Lys-65. Substrate contacts are provided by Tyr-122 and Arg-126. Residues 139-140 (QS) and Trp-184 each bind FMN. 190-192 (RLH) lines the substrate pocket. Arg-194 provides a ligand contact to FMN.

The protein belongs to the pyridoxamine 5'-phosphate oxidase family. In terms of assembly, homodimer. It depends on FMN as a cofactor.

It carries out the reaction pyridoxamine 5'-phosphate + O2 + H2O = pyridoxal 5'-phosphate + H2O2 + NH4(+). The catalysed reaction is pyridoxine 5'-phosphate + O2 = pyridoxal 5'-phosphate + H2O2. It participates in cofactor metabolism; pyridoxal 5'-phosphate salvage; pyridoxal 5'-phosphate from pyridoxamine 5'-phosphate: step 1/1. The protein operates within cofactor metabolism; pyridoxal 5'-phosphate salvage; pyridoxal 5'-phosphate from pyridoxine 5'-phosphate: step 1/1. Catalyzes the oxidation of either pyridoxine 5'-phosphate (PNP) or pyridoxamine 5'-phosphate (PMP) into pyridoxal 5'-phosphate (PLP). The polypeptide is Pyridoxine/pyridoxamine 5'-phosphate oxidase (Bradyrhizobium diazoefficiens (strain JCM 10833 / BCRC 13528 / IAM 13628 / NBRC 14792 / USDA 110)).